Reading from the N-terminus, the 291-residue chain is Methionine aminopeptidase (291 aa).

Histidine 65 is a substrate binding site. A divalent metal cation contacts are provided by aspartate 85, aspartate 96, and histidine 155. Histidine 163 is a substrate binding site. A divalent metal cation is bound by residues glutamate 188 and glutamate 276.

This sequence belongs to the peptidase M24A family. Methionine aminopeptidase archaeal type 2 subfamily. Monomer. The cofactor is Co(2+). Requires Zn(2+) as cofactor. Mn(2+) is required as a cofactor. It depends on Fe(2+) as a cofactor.

It carries out the reaction Release of N-terminal amino acids, preferentially methionine, from peptides and arylamides.. Its function is as follows. Removes the N-terminal methionine from nascent proteins. The N-terminal methionine is often cleaved when the second residue in the primary sequence is small and uncharged (Met-Ala-, Cys, Gly, Pro, Ser, Thr, or Val). The protein is Methionine aminopeptidase of Archaeoglobus fulgidus (strain ATCC 49558 / DSM 4304 / JCM 9628 / NBRC 100126 / VC-16).